A 324-amino-acid chain; its full sequence is MSASPQSRPTTIACLLGPTASGKTAAALALAARRPIEIVSIDSALVYRDMDIGTAKPTRDERARVPHHLIDIIDPADAYSAAEFRADALRLIGEIAARGRTPLLAGGTMLYYKALTQGLNDLPTADPAVRAELDADAARDGWPALHARLAQVDPATAARLAPNDSQRIQRALEVFLLSGQPMSVLLAAPRRADDEAAAYRFVPVALEPSDRAVLHARIAQRFDAMLDAGFIDEVERLRRREDLHPDLPSMRCVGYRQAWEFLDGDTDYRTMRDKGIFATRQLCKRQITWLRALPERIVVDCVAPDATARALDTLERVLDDHLPA.

Residue G17 to T24 coordinates ATP. Substrate is bound at residue T19–T24. 4 interaction with substrate tRNA regions span residues D42 to L45, Q166 to R170, R251 to R256, and K284 to R291.

This sequence belongs to the IPP transferase family. As to quaternary structure, monomer. It depends on Mg(2+) as a cofactor.

It catalyses the reaction adenosine(37) in tRNA + dimethylallyl diphosphate = N(6)-dimethylallyladenosine(37) in tRNA + diphosphate. Its function is as follows. Catalyzes the transfer of a dimethylallyl group onto the adenine at position 37 in tRNAs that read codons beginning with uridine, leading to the formation of N6-(dimethylallyl)adenosine (i(6)A). The protein is tRNA dimethylallyltransferase of Burkholderia ambifaria (strain MC40-6).